The primary structure comprises 351 residues: D-alanine--D-alanine ligase (351 aa).

The 209-residue stretch at 135 to 343 (NQIFLQSGQK…MEEVFSDLIE (209 aa)) folds into the ATP-grasp domain. 167–222 (LETLGFPQFLKPVEGGSSVSVYKITNREQLKEKLALIFESDSKVMSQSFLTGIEVS) contributes to the ATP binding site. Positions 298, 310, and 312 each coordinate Mg(2+).

It belongs to the D-alanine--D-alanine ligase family. Mg(2+) serves as cofactor. Mn(2+) is required as a cofactor.

It is found in the cytoplasm. The catalysed reaction is 2 D-alanine + ATP = D-alanyl-D-alanine + ADP + phosphate + H(+). It functions in the pathway cell wall biogenesis; peptidoglycan biosynthesis. Functionally, cell wall formation. In Leptospira interrogans serogroup Icterohaemorrhagiae serovar Lai (strain 56601), this protein is D-alanine--D-alanine ligase.